A 119-amino-acid chain; its full sequence is Large ribosomal subunit protein uL18 (119 aa).

The protein belongs to the universal ribosomal protein uL18 family. Part of the 50S ribosomal subunit; part of the 5S rRNA/L5/L18/L25 subcomplex. Contacts the 5S and 23S rRNAs.

This is one of the proteins that bind and probably mediate the attachment of the 5S RNA into the large ribosomal subunit, where it forms part of the central protuberance. The polypeptide is Large ribosomal subunit protein uL18 (Xanthomonas axonopodis pv. citri (strain 306)).